Reading from the N-terminus, the 571-residue chain is Penton protein (571 aa).

The interval 297–325 is disordered; that stretch reads KDDTEQGGGGAGGSNSSGSGAEENSNAAA. Gly residues predominate over residues 302 to 311; sequence QGGGGAGGSN. Residues 312 to 325 show a composition bias toward low complexity; it reads SSGSGAEENSNAAA. The Cell attachment site signature appears at 340-342; that stretch reads RGD. Residues 347–383 form a disordered region; sequence RAEEKRAEAEAAAEAAAPAAQPEVEKPQKKPVIKPLT. Positions 356–368 are enriched in low complexity; the sequence is EAAAEAAAPAAQP.

This sequence belongs to the adenoviridae penton family. Interacts (via the cell attachment site RGD) with host heterodimer ITGAV-ITGB5; this interaction promotes virus internalization. Interacts with host WWP1 and WWP2. Interacts with the fiber protein (via N-terminal tail region). Interacts with the capsid vertex protein; this interaction binds the penton base to neighboring peripentonal hexons.

The protein localises to the virion. It localises to the host nucleus. Major capsid protein that self-associates to form penton base pentamers, each in the shape of a pentagon, situated at the 12 vertices of the pseudo T=25 capsid. Involved in virus secondary attachment to host cell after initial attachment by the fiber protein. Binds host integrin heterodimer ITGAV-ITGB5 (alphaV-beta5) thereby triggering clathrin-mediated endocytosis of virions. Mediates initial virus attachment to CXADR-negative cells. Binding to integrins ITGAV-ITGB5 also seems to induce macropinocytosis uptake of the virus. As the virus enters the host cell, penton proteins are shed concomitant with virion acidification in the endosome. The sequence is that of Penton protein from Homo sapiens (Human).